Consider the following 220-residue polypeptide: FMN-dependent NADH:quinone oxidoreductase (220 aa).

Residues S10, 17-19 (SAS), and 136-139 (SRGG) each bind FMN. The tract at residues 200–220 (HSEAVTKAKELTERLTADNGR) is disordered.

Belongs to the azoreductase type 1 family. As to quaternary structure, homodimer. The cofactor is FMN.

The enzyme catalyses 2 a quinone + NADH + H(+) = 2 a 1,4-benzosemiquinone + NAD(+). It carries out the reaction N,N-dimethyl-1,4-phenylenediamine + anthranilate + 2 NAD(+) = 2-(4-dimethylaminophenyl)diazenylbenzoate + 2 NADH + 2 H(+). In terms of biological role, quinone reductase that provides resistance to thiol-specific stress caused by electrophilic quinones. Its function is as follows. Also exhibits azoreductase activity. Catalyzes the reductive cleavage of the azo bond in aromatic azo compounds to the corresponding amines. The chain is FMN-dependent NADH:quinone oxidoreductase from Streptomyces coelicolor (strain ATCC BAA-471 / A3(2) / M145).